The primary structure comprises 217 residues: Cytidylate kinase (217 aa).

11-19 (GPAGAGKST) contributes to the ATP binding site.

It belongs to the cytidylate kinase family. Type 1 subfamily.

It localises to the cytoplasm. It carries out the reaction CMP + ATP = CDP + ADP. It catalyses the reaction dCMP + ATP = dCDP + ADP. This is Cytidylate kinase from Clostridium perfringens (strain SM101 / Type A).